A 310-amino-acid chain; its full sequence is MNNKNHLKIATRQSPLALWQANYVKDRLTALYPDLQVELVTMVTKGDVILDTPLAKIGGKGLFVKELEHALLNHEADIAVHSMKDVPMEFPQGLGLSVICKREDPRDAFVSNKYRSLAELPQGAIVGTSSLRRQCQLKSLRPDLDIRSLRGNVGTRLSKLDNGDYDAIILASAGLIRLGMAERIASFIETDISLPAAGQGAVGIECRVDDELVQSLLAPLAHQETTICVLAERAMNNRLQGGCQVPIGGFAQVKNGEVFLRALVGATDGSQIIRAEGKSAVENAEVLGVQIAEDLLQQGADKILKSVYQD.

S-(dipyrrolylmethanemethyl)cysteine is present on C243.

It belongs to the HMBS family. In terms of assembly, monomer. Requires dipyrromethane as cofactor.

It catalyses the reaction 4 porphobilinogen + H2O = hydroxymethylbilane + 4 NH4(+). Its pathway is porphyrin-containing compound metabolism; protoporphyrin-IX biosynthesis; coproporphyrinogen-III from 5-aminolevulinate: step 2/4. Functionally, tetrapolymerization of the monopyrrole PBG into the hydroxymethylbilane pre-uroporphyrinogen in several discrete steps. The polypeptide is Porphobilinogen deaminase (Mannheimia succiniciproducens (strain KCTC 0769BP / MBEL55E)).